Reading from the N-terminus, the 319-residue chain is Acetyl-coenzyme A carboxylase carboxyl transferase subunit alpha (319 aa).

Residues 35 to 296 enclose the CoA carboxyltransferase C-terminal domain; sequence DLEKEIKQLE…KQRLLEQLKE (262 aa).

This sequence belongs to the AccA family. As to quaternary structure, acetyl-CoA carboxylase is a heterohexamer composed of biotin carboxyl carrier protein (AccB), biotin carboxylase (AccC) and two subunits each of ACCase subunit alpha (AccA) and ACCase subunit beta (AccD).

The protein resides in the cytoplasm. It catalyses the reaction N(6)-carboxybiotinyl-L-lysyl-[protein] + acetyl-CoA = N(6)-biotinyl-L-lysyl-[protein] + malonyl-CoA. Its pathway is lipid metabolism; malonyl-CoA biosynthesis; malonyl-CoA from acetyl-CoA: step 1/1. Its function is as follows. Component of the acetyl coenzyme A carboxylase (ACC) complex. First, biotin carboxylase catalyzes the carboxylation of biotin on its carrier protein (BCCP) and then the CO(2) group is transferred by the carboxyltransferase to acetyl-CoA to form malonyl-CoA. The polypeptide is Acetyl-coenzyme A carboxylase carboxyl transferase subunit alpha (Aliivibrio fischeri (strain ATCC 700601 / ES114) (Vibrio fischeri)).